Reading from the N-terminus, the 227-residue chain is Cytochrome c oxidase subunit 2 (227 aa).

The Mitochondrial intermembrane segment spans residues 1–14; the sequence is MAYPMQLGFQDATS. The chain crosses the membrane as a helical span at residues 15 to 45; that stretch reads PIMEELLHFHDHTLMIVFLISSLVLYIISLM. The Mitochondrial matrix portion of the chain corresponds to 46 to 59; that stretch reads LTTKLTHTSTMDAQ. Residues 60 to 87 traverse the membrane as a helical segment; the sequence is EVETIWTILPAIILILIALPSLRILYMM. Over 88-227 the chain is Mitochondrial intermembrane; the sequence is DEINNPSLTV…YFEKWSASML (140 aa). Residues His161, Cys196, Glu198, Cys200, His204, and Met207 each coordinate Cu cation. Residue Glu198 coordinates Mg(2+). Tyr218 bears the Phosphotyrosine mark.

Belongs to the cytochrome c oxidase subunit 2 family. In terms of assembly, component of the cytochrome c oxidase (complex IV, CIV), a multisubunit enzyme composed of 14 subunits. The complex is composed of a catalytic core of 3 subunits MT-CO1, MT-CO2 and MT-CO3, encoded in the mitochondrial DNA, and 11 supernumerary subunits COX4I, COX5A, COX5B, COX6A, COX6B, COX6C, COX7A, COX7B, COX7C, COX8 and NDUFA4, which are encoded in the nuclear genome. The complex exists as a monomer or a dimer and forms supercomplexes (SCs) in the inner mitochondrial membrane with NADH-ubiquinone oxidoreductase (complex I, CI) and ubiquinol-cytochrome c oxidoreductase (cytochrome b-c1 complex, complex III, CIII), resulting in different assemblies (supercomplex SCI(1)III(2)IV(1) and megacomplex MCI(2)III(2)IV(2)). Found in a complex with TMEM177, COA6, COX18, COX20, SCO1 and SCO2. Interacts with TMEM177 in a COX20-dependent manner. Interacts with COX20. Interacts with COX16. The cofactor is Cu cation.

It is found in the mitochondrion inner membrane. The enzyme catalyses 4 Fe(II)-[cytochrome c] + O2 + 8 H(+)(in) = 4 Fe(III)-[cytochrome c] + 2 H2O + 4 H(+)(out). Functionally, component of the cytochrome c oxidase, the last enzyme in the mitochondrial electron transport chain which drives oxidative phosphorylation. The respiratory chain contains 3 multisubunit complexes succinate dehydrogenase (complex II, CII), ubiquinol-cytochrome c oxidoreductase (cytochrome b-c1 complex, complex III, CIII) and cytochrome c oxidase (complex IV, CIV), that cooperate to transfer electrons derived from NADH and succinate to molecular oxygen, creating an electrochemical gradient over the inner membrane that drives transmembrane transport and the ATP synthase. Cytochrome c oxidase is the component of the respiratory chain that catalyzes the reduction of oxygen to water. Electrons originating from reduced cytochrome c in the intermembrane space (IMS) are transferred via the dinuclear copper A center (CU(A)) of subunit 2 and heme A of subunit 1 to the active site in subunit 1, a binuclear center (BNC) formed by heme A3 and copper B (CU(B)). The BNC reduces molecular oxygen to 2 water molecules using 4 electrons from cytochrome c in the IMS and 4 protons from the mitochondrial matrix. The chain is Cytochrome c oxidase subunit 2 (MT-CO2) from Bison bonasus (European bison).